The sequence spans 826 residues: Ribonucleoside-diphosphate reductase large subunit (826 aa).

Substrate is bound by residues Thr-171, 186–187, Gly-217, 387–391, and 594–598; these read SC, NLCAE, and PTSGC. Cysteines 187 and 403 form a disulfide. Asn-387 (proton acceptor) is an active-site residue. Cys-389 (cysteine radical intermediate) is an active-site residue. The active-site Proton acceptor is the Glu-391.

Belongs to the ribonucleoside diphosphate reductase large chain family. In terms of assembly, heterotetramer composed of a homodimer of the large subunit (R1) and a homodimer of the small subunit (R2). Larger multisubunit protein complex are also active, composed of (R1)n(R2)n.

The catalysed reaction is a 2'-deoxyribonucleoside 5'-diphosphate + [thioredoxin]-disulfide + H2O = a ribonucleoside 5'-diphosphate + [thioredoxin]-dithiol. In terms of biological role, ribonucleoside-diphosphate reductase holoenzyme provides the precursors necessary for viral DNA synthesis. Allows virus growth in non-dividing cells, as well as reactivation from latency in infected hosts. Catalyzes the biosynthesis of deoxyribonucleotides from the corresponding ribonucleotides. In Epstein-Barr virus (strain GD1) (HHV-4), this protein is Ribonucleoside-diphosphate reductase large subunit.